A 225-amino-acid polypeptide reads, in one-letter code: Insulin-induced gene 2 protein (225 aa).

Residues 1 to 28 (MAEGETKSPGPKKCGPYISSVTSQSVNL) are Cytoplasmic-facing. The helical transmembrane segment at 29-51 (MIRGVVLFFIGVFLALVLNLLQI) threads the bilayer. The Lumenal segment spans residues 52 to 70 (QRNVTLFPPDVIASIFSSA). The chain crosses the membrane as a helical span at residues 71–88 (WWVPPCCGTASAVIGLLY). Residues 89-103 (PCIDRHLGEPHKFKR) lie on the Cytoplasmic side of the membrane. Residues 104–126 (EWSSVMRCVAVFVGINHASAKVD) form a helical membrane-spanning segment. The Lumenal segment spans residues 127–129 (FDN). The chain crosses the membrane as a helical span at residues 130–148 (NIQLSLTLAALSIGLWWTF). Over 149–153 (DRSRS) the chain is Cytoplasmic. A Phosphoserine modification is found at serine 151. A helical membrane pass occupies residues 154-175 (GFGLGVGIAFLATLVTQLLVYN). Topologically, residues 176 to 189 (GVYQYTSPDFLYVR) are lumenal. A helical transmembrane segment spans residues 190–207 (SWLPCIFFAGGITMGNIG). The Cytoplasmic portion of the chain corresponds to 208-225 (RQLAMYECKVIAEKSHQE). Position 215 is a cysteine sulfenic acid (-SOH); alternate (cysteine 215). Cysteine 215 is covalently cross-linked (Glycyl cysteine thioester (Cys-Gly) (interchain with G-Cter in ubiquitin); alternate). Positions 219–225 (AEKSHQE) match the KxHxx motif.

The protein belongs to the INSIG family. As to quaternary structure, interacts with SCAP; interaction is direct and only takes place in the presence of sterols; it prevents interaction between SCAP and the coat protein complex II (COPII). Associates with the SCAP-SREBP complex (composed of SCAP and SREBF1/SREBP1 or SREBF2/SREBP2); association is mediated via its interaction with SCAP and only takes place in the presence of sterols. Interacts with RNF139. Interacts with RNF145. Post-translationally, phosphorylation at Ser-151 by PCK1 reduces binding to oxysterol, disrupting the interaction between INSIG2 and SCAP, thereby promoting nuclear translocation of SREBP proteins (SREBF1/SREBP1 or SREBF2/SREBP2) and subsequent transcription of downstream lipogenesis-related genes. In terms of processing, polyubiquitinated by AMFR/gp78 at Cys-215 in some tissues such as adipose tissues, undifferentiated myoblasts and liver, leading to its degradation. In differentiated myotubes, Cys-215 oxidation prevents ubiquitination at the same site, resulting in protein stabilization. Oxidized at Cys-215 in differentiated myotubes, preventing ubiquitination at the same site, and resulting in protein stabilization.

It is found in the endoplasmic reticulum membrane. In terms of biological role, oxysterol-binding protein that mediates feedback control of cholesterol synthesis by controlling both endoplasmic reticulum to Golgi transport of SCAP and degradation of HMGCR. Acts as a negative regulator of cholesterol biosynthesis by mediating the retention of the SCAP-SREBP complex in the endoplasmic reticulum, thereby blocking the processing of sterol regulatory element-binding proteins (SREBPs) SREBF1/SREBP1 and SREBF2/SREBP2. Binds oxysterol, including 22-hydroxycholesterol, 24-hydroxycholesterol, 25-hydroxycholesterol and 27-hydroxycholesterol, regulating interaction with SCAP and retention of the SCAP-SREBP complex in the endoplasmic reticulum. In presence of oxysterol, interacts with SCAP, retaining the SCAP-SREBP complex in the endoplasmic reticulum, thereby preventing SCAP from escorting SREBF1/SREBP1 and SREBF2/SREBP2 to the Golgi. Sterol deprivation or phosphorylation by PCK1 reduce oxysterol-binding, disrupting the interaction between INSIG2 and SCAP, thereby promoting Golgi transport of the SCAP-SREBP complex, followed by processing and nuclear translocation of SREBF1/SREBP1 and SREBF2/SREBP2. Also regulates cholesterol synthesis by regulating degradation of HMGCR: initiates the sterol-mediated ubiquitin-mediated endoplasmic reticulum-associated degradation (ERAD) of HMGCR via recruitment of the reductase to the ubiquitin ligase RNF139. The chain is Insulin-induced gene 2 protein from Sus scrofa (Pig).